The sequence spans 86 residues: Acyl carrier protein (86 aa).

The region spanning 10 to 85 is the Carrier domain; sequence DKIEQKVIEM…DVIQYIKERQ (76 aa). S45 is subject to O-(pantetheine 4'-phosphoryl)serine.

It belongs to the acyl carrier protein (ACP) family. 4'-phosphopantetheine is transferred from CoA to a specific serine of apo-ACP by AcpS. This modification is essential for activity because fatty acids are bound in thioester linkage to the sulfhydryl of the prosthetic group.

The protein resides in the cytoplasm. Its pathway is lipid metabolism; fatty acid biosynthesis. Carrier of the growing fatty acid chain in fatty acid biosynthesis. This Rickettsia canadensis (strain McKiel) protein is Acyl carrier protein.